A 178-amino-acid chain; its full sequence is Interleukin-10 (178 aa).

The N-terminal stretch at M1–A18 is a signal peptide. Cystine bridges form between C30–C126 and C80–C132. N134 carries N-linked (GlcNAc...) asparagine glycosylation.

It belongs to the IL-10 family. In terms of assembly, homodimer. Interacts with IL10RA and IL10RB.

It localises to the secreted. Major immune regulatory cytokine that acts on many cells of the immune system where it has profound anti-inflammatory functions, limiting excessive tissue disruption caused by inflammation. Mechanistically, IL10 binds to its heterotetrameric receptor comprising IL10RA and IL10RB leading to JAK1 and STAT2-mediated phosphorylation of STAT3. In turn, STAT3 translocates to the nucleus where it drives expression of anti-inflammatory mediators. Targets antigen-presenting cells (APCs) such as macrophages and monocytes and inhibits their release of pro-inflammatory cytokines including granulocyte-macrophage colony-stimulating factor /GM-CSF, granulocyte colony-stimulating factor/G-CSF, IL-1 alpha, IL-1 beta, IL-6, IL-8 and TNF-alpha. Also interferes with antigen presentation by reducing the expression of MHC-class II and co-stimulatory molecules, thereby inhibiting their ability to induce T cell activation. In addition, controls the inflammatory response of macrophages by reprogramming essential metabolic pathways including mTOR signaling. The protein is Interleukin-10 (IL10) of Bos taurus (Bovine).